The chain runs to 677 residues: Methionine--tRNA ligase (677 aa).

The short motif at 15 to 25 (PYANGSIHLGH) is the 'HIGH' region element. 4 residues coordinate Zn(2+): cysteine 146, cysteine 149, cysteine 159, and cysteine 162. The 'KMSKS' region signature appears at 333–337 (KMSKS). Residue lysine 336 participates in ATP binding. Residues 575–677 (DFAKVDLRVA…AGAKPGHQVK (103 aa)) enclose the tRNA-binding domain.

Belongs to the class-I aminoacyl-tRNA synthetase family. MetG type 1 subfamily. Homodimer. Requires Zn(2+) as cofactor.

It localises to the cytoplasm. It catalyses the reaction tRNA(Met) + L-methionine + ATP = L-methionyl-tRNA(Met) + AMP + diphosphate. Its function is as follows. Is required not only for elongation of protein synthesis but also for the initiation of all mRNA translation through initiator tRNA(fMet) aminoacylation. This is Methionine--tRNA ligase from Escherichia coli O17:K52:H18 (strain UMN026 / ExPEC).